The primary structure comprises 211 residues: Arginine exporter protein ArgO (211 aa).

Helical transmembrane passes span 1-21 (MISYYFQGFALGAAMILPLGP), 37-57 (LMIALLCALSDLVLISAGIFG), 68-88 (LLALVTWGGVAFLLWYGFGAL), 111-131 (IIATMLAVTWLNPHVYLDTFV), 147-167 (WFALGTISASFLWFFGLALLA), and 179-199 (AQRIINILVGVVMWLIAFQLA).

Belongs to the LysE/ArgO transporter (TC 2.A.75) family.

It is found in the cell inner membrane. It carries out the reaction L-arginine(in) = L-arginine(out). In terms of biological role, involved in the export of arginine. Important to control the intracellular level of arginine and the correct balance between arginine and lysine. This chain is Arginine exporter protein ArgO, found in Salmonella paratyphi C (strain RKS4594).